An 855-amino-acid polypeptide reads, in one-letter code: DNA mismatch repair protein MutS (855 aa).

Residue 616–623 (GPNMGGKS) participates in ATP binding.

It belongs to the DNA mismatch repair MutS family.

Its function is as follows. This protein is involved in the repair of mismatches in DNA. It is possible that it carries out the mismatch recognition step. This protein has a weak ATPase activity. The sequence is that of DNA mismatch repair protein MutS from Escherichia coli O139:H28 (strain E24377A / ETEC).